Consider the following 305-residue polypeptide: Tyrosine recombinase XerD (305 aa).

The region spanning 2 to 87 (SQGEAWADAF…AVRQFYRFVL (86 aa)) is the Core-binding (CB) domain. The Tyr recombinase domain occupies 108–295 (PLPKVLERDE…AGEHLAHIVQ (188 aa)). Catalysis depends on residues Arg-149, Lys-173, His-247, Arg-250, and His-273. Tyr-282 acts as the O-(3'-phospho-DNA)-tyrosine intermediate in catalysis.

This sequence belongs to the 'phage' integrase family. XerD subfamily. Forms a cyclic heterotetrameric complex composed of two molecules of XerC and two molecules of XerD.

Its subcellular location is the cytoplasm. In terms of biological role, site-specific tyrosine recombinase, which acts by catalyzing the cutting and rejoining of the recombining DNA molecules. The XerC-XerD complex is essential to convert dimers of the bacterial chromosome into monomers to permit their segregation at cell division. It also contributes to the segregational stability of plasmids. This chain is Tyrosine recombinase XerD, found in Caulobacter vibrioides (strain ATCC 19089 / CIP 103742 / CB 15) (Caulobacter crescentus).